Here is a 33-residue protein sequence, read N- to C-terminus: Dermaseptin-H6 (33 aa).

Leucine 33 bears the Leucine amide mark.

As to expression, expressed by the skin glands.

The protein localises to the secreted. Functionally, has antimicrobial activity. The chain is Dermaseptin-H6 from Pithecopus hypochondrialis (Orange-legged leaf frog).